Reading from the N-terminus, the 211-residue chain is Putative transposase for insertion sequence element IS402 (211 aa).

The tract at residues 51 to 71 (RRWGRPKTGPNPTDRARPGSK) is disordered.

The protein belongs to the transposase 11 family.

Involved in the transposition of the insertion sequence. This is Putative transposase for insertion sequence element IS402 from Burkholderia cepacia (Pseudomonas cepacia).